Consider the following 209-residue polypeptide: Octanoyltransferase (209 aa).

Residues 28 to 203 (NATPETLLLL…RFQGLLDEWL (176 aa)) form the BPL/LPL catalytic domain. Substrate contacts are provided by residues 66 to 73 (RGGDVTFH), 133 to 135 (AIG), and 146 to 148 (GFA). Cys164 acts as the Acyl-thioester intermediate in catalysis.

Belongs to the LipB family.

The protein localises to the cytoplasm. The enzyme catalyses octanoyl-[ACP] + L-lysyl-[protein] = N(6)-octanoyl-L-lysyl-[protein] + holo-[ACP] + H(+). The protein operates within protein modification; protein lipoylation via endogenous pathway; protein N(6)-(lipoyl)lysine from octanoyl-[acyl-carrier-protein]: step 1/2. Functionally, catalyzes the transfer of endogenously produced octanoic acid from octanoyl-acyl-carrier-protein onto the lipoyl domains of lipoate-dependent enzymes. Lipoyl-ACP can also act as a substrate although octanoyl-ACP is likely to be the physiological substrate. This is Octanoyltransferase from Pelobacter propionicus (strain DSM 2379 / NBRC 103807 / OttBd1).